Consider the following 204-residue polypeptide: Protein GrpE (204 aa).

The span at 1–12 shows a compositional bias: basic and acidic residues; sequence MSNQEKKMHEEE. The tract at residues 1-37 is disordered; sequence MSNQEKKMHEEELQQQETVEADTEAEAEAVGTDADIE.

This sequence belongs to the GrpE family. As to quaternary structure, homodimer.

It localises to the cytoplasm. Functionally, participates actively in the response to hyperosmotic and heat shock by preventing the aggregation of stress-denatured proteins, in association with DnaK and GrpE. It is the nucleotide exchange factor for DnaK and may function as a thermosensor. Unfolded proteins bind initially to DnaJ; upon interaction with the DnaJ-bound protein, DnaK hydrolyzes its bound ATP, resulting in the formation of a stable complex. GrpE releases ADP from DnaK; ATP binding to DnaK triggers the release of the substrate protein, thus completing the reaction cycle. Several rounds of ATP-dependent interactions between DnaJ, DnaK and GrpE are required for fully efficient folding. This Vibrio proteolyticus (Aeromonas proteolytica) protein is Protein GrpE.